The chain runs to 416 residues: Mitochondrial inner membrane i-AAA protease complex subunit MGR1 (416 aa).

The tract at residues 1-28 is disordered; that stretch reads MAVFTPPSGNSNSTDHTHTQDDHDKDDN. Over 1–56 the chain is Mitochondrial intermembrane; the sequence is MAVFTPPSGNSNSTDHTHTQDDHDKDDNDIKKFYIRPSLGLKLWGPLVPAPDNLPG. A compositionally biased stretch (basic and acidic residues) spans 15 to 28; it reads DHTHTQDDHDKDDN. Residues 57–73 traverse the membrane as a helical segment; that stretch reads LYTLITIQSAVGFFALW. Residues 74–151 lie on the Mitochondrial matrix side of the membrane; it reads RLRRLYKLPP…RQSRFVSVRK (78 aa). The chain crosses the membrane as a helical span at residues 152 to 169; it reads LLWGLFGSLLLSQSLLEL. Topologically, residues 170 to 416 are mitochondrial intermembrane; it reads TRLNFLKYDP…PKALTNEKTH (247 aa). Positions 390-400 are enriched in polar residues; it reads SHTKTPTSTDQ. The interval 390 to 416 is disordered; the sequence is SHTKTPTSTDQPLPGPTPKALTNEKTH.

Belongs to the MGR1 family. Component of the mitochondrial inner membrane i-AAA protease complex composed of at least MRG1 and YME1. Interacts directly with YME1.

It is found in the mitochondrion inner membrane. Functionally, component of the mitochondrial inner membrane i-AAA protease complex required for mitochondrial inner membrane protein turnover. Required for growth of cells lacking the mitochondrial genome. The protein is Mitochondrial inner membrane i-AAA protease complex subunit MGR1 (MGR1) of Saccharomyces cerevisiae (strain YJM789) (Baker's yeast).